A 92-amino-acid polypeptide reads, in one-letter code: Small ribosomal subunit protein uS19 (92 aa).

Belongs to the universal ribosomal protein uS19 family.

In terms of biological role, protein S19 forms a complex with S13 that binds strongly to the 16S ribosomal RNA. In Cyanothece sp. (strain PCC 7425 / ATCC 29141), this protein is Small ribosomal subunit protein uS19.